Reading from the N-terminus, the 467-residue chain is Cysteine--tRNA ligase (467 aa).

A Zn(2+)-binding site is contributed by Cys-29. The short motif at 31–41 (ATVQGEPHIGH) is the 'HIGH' region element. Residues Cys-207, His-232, and Glu-236 each coordinate Zn(2+). The 'KMSKS' region motif lies at 263–267 (KMSKS). Lys-266 provides a ligand contact to ATP. Residues 446–467 (IDVTDTPNGPEWSLRTARGKAN) are disordered.

It belongs to the class-I aminoacyl-tRNA synthetase family. As to quaternary structure, monomer. The cofactor is Zn(2+).

The protein localises to the cytoplasm. It carries out the reaction tRNA(Cys) + L-cysteine + ATP = L-cysteinyl-tRNA(Cys) + AMP + diphosphate. The polypeptide is Cysteine--tRNA ligase (Nocardia farcinica (strain IFM 10152)).